Reading from the N-terminus, the 563-residue chain is Autotransporter BimA (563 aa).

The interval Met1–Ser20 is disordered. An N-terminal signal peptide occupies residues Met1 to Ala48. Residues Ala61–Tyr472 form a surface exposed passenger domain region. The WH2 domain maps to Ala65–Val82. The central and acidic domains stretch occupies residues Thr96–Glu130. The tract at residues Arg109 to Thr350 is disordered. 3 stretches are compositionally biased toward low complexity: residues Ala138–Arg150, Pro162–Arg197, and Ser211–Arg227. Polar residues-rich tracts occupy residues Gly228 to Thr238 and Ser269 to Thr281. Residues Thr473–Arg509 form an outer membrane translocation of the passenger domain region. 4 beta stranded membrane-spanning segments follow: residues Asp510–Gly519, His525–Ile536, Arg543–Ser549, and Asn553–Trp563. Positions Asp510–Trp563 are translocator domain.

This sequence belongs to the autotransporter-2 (AT-2) (TC 1.B.40) family. Homotrimer. Interacts with host G-actin; the interaction is direct. Interacts (via central and acidic domains) with host ACTR2/ARP2 and ACTR3/ARP3.

Its subcellular location is the cell outer membrane. It localises to the cell surface. Its function is as follows. During host cell infection, required for actin-based intracellular motility. Mediates actin tail formation at one pole of the bacteria surface by recruiting host Arp2/3 (ACTR3/ARP3-ACTR2/ARP2) which leads to actin polymerization which provides the propulsive force for intracellular movement and intercellular dissemination of the bacterium. The chain is Autotransporter BimA from Burkholderia thailandensis (strain ATCC 700388 / DSM 13276 / CCUG 48851 / CIP 106301 / E264).